The following is an 852-amino-acid chain: Nucleolar protein 14 homolog (852 aa).

The segment at 1–40 (MVAKGKKASADAVYAKKTTRSANPFDNSTAQSSKRGNPFD) is disordered. Positions 20–35 (RSANPFDNSTAQSSKR) are enriched in polar residues. Positions 190 to 221 (IDEMIVEQKRRKNEIAKEKDEVYDLTEKLDAN) form a coiled coil. Disordered stretches follow at residues 288–324 (RRMR…GEDD) and 338–410 (LGTH…KSAD). Over residues 344–353 (GKKEAVLKGD) the composition is skewed to basic and acidic residues. Over residues 354–381 (ENEDDDDKEGEEEEEEDSDEESDSEVDN) the composition is skewed to acidic residues. A coiled-coil region spans residues 774–851 (KMSKAKEERA…ELSRAKKKKK (78 aa)).

It belongs to the NOP14 family. Component of the ribosomal small subunit (SSU) processome.

Its subcellular location is the nucleus. It is found in the nucleolus. Involved in nucleolar processing of pre-18S ribosomal RNA. Has a role in the nuclear export of 40S pre-ribosomal subunit to the cytoplasm. The sequence is that of Nucleolar protein 14 homolog (l(3)07882) from Drosophila melanogaster (Fruit fly).